Reading from the N-terminus, the 330-residue chain is ATP-dependent (S)-NAD(P)H-hydrate dehydratase (330 aa).

One can recognise a YjeF C-terminal domain in the interval 36 to 327 (VIPLVRNTIP…QEINSAFKKL (292 aa)). (6S)-NADPHX is bound by residues G136 and 189–195 (NFMEFTR). ATP is bound by residues 229–233 (KGEED) and 248–257 (GSGRRCGGQG). D258 provides a ligand contact to (6S)-NADPHX.

Belongs to the NnrD/CARKD family. Mg(2+) serves as cofactor.

It catalyses the reaction (6S)-NADHX + ATP = ADP + phosphate + NADH + H(+). It carries out the reaction (6S)-NADPHX + ATP = ADP + phosphate + NADPH + H(+). Catalyzes the dehydration of the S-form of NAD(P)HX at the expense of ATP, which is converted to ADP. Together with NAD(P)HX epimerase, which catalyzes the epimerization of the S- and R-forms, the enzyme allows the repair of both epimers of NAD(P)HX, a damaged form of NAD(P)H that is a result of enzymatic or heat-dependent hydration. This Danio rerio (Zebrafish) protein is ATP-dependent (S)-NAD(P)H-hydrate dehydratase.